The chain runs to 83 residues: Sec-independent protein translocase protein TatA (83 aa).

Residues 1 to 21 (MGSLSPWHWAILAVVVIVLFG) traverse the membrane as a helical segment. The interval 48–83 (NENKAEASIETPTPVQSQRVDPSAASGQDSTEARPA) is disordered. Polar residues predominate over residues 57–77 (ETPTPVQSQRVDPSAASGQDS).

Belongs to the TatA/E family. In terms of assembly, the Tat system comprises two distinct complexes: a TatABC complex, containing multiple copies of TatA, TatB and TatC subunits, and a separate TatA complex, containing only TatA subunits. Substrates initially bind to the TatABC complex, which probably triggers association of the separate TatA complex to form the active translocon.

Its subcellular location is the cell membrane. Part of the twin-arginine translocation (Tat) system that transports large folded proteins containing a characteristic twin-arginine motif in their signal peptide across membranes. TatA could form the protein-conducting channel of the Tat system. In Mycobacterium bovis (strain BCG / Pasteur 1173P2), this protein is Sec-independent protein translocase protein TatA.